A 156-amino-acid polypeptide reads, in one-letter code: Small ribosomal subunit protein uS7c (156 aa).

It belongs to the universal ribosomal protein uS7 family. As to quaternary structure, part of the 30S ribosomal subunit.

The protein resides in the plastid. Its subcellular location is the chloroplast. Its function is as follows. One of the primary rRNA binding proteins, it binds directly to 16S rRNA where it nucleates assembly of the head domain of the 30S subunit. This is Small ribosomal subunit protein uS7c (rps7) from Chara vulgaris (Common stonewort).